The primary structure comprises 831 residues: Multiphosphoryl transfer protein (831 aa).

An HPr domain is found at 1–90 (MLTIQFLCPL…EYIQVRFIDS (90 aa)). The Pros-phosphohistidine intermediate; for HPr activity role is filled by H15. At H15 the chain carries Phosphohistidine; by EI. The segment at 119–650 (GNVLASGVGV…AVKSQLRQLD (532 aa)) is PTS EI. Residue H298 is the Tele-phosphohistidine intermediate; for PTS EI activity of the active site. H298 bears the Phosphohistidine; by autocatalysis mark. Phosphoenolpyruvate is bound by residues R405 and R441. Positions 540 and 564 each coordinate Mg(2+). Phosphoenolpyruvate is bound by residues 563–564 (ND) and R574. C611 functions as the Proton donor; for EI activity in the catalytic mechanism. Residues 685 to 828 (PLLALENIFV…QSILTLLETE (144 aa)) enclose the PTS EIIA type-2 domain. H747 acts as the Tele-phosphohistidine intermediate; for PTS EIIA activity in catalysis. Phosphohistidine; by HPr is present on H747.

It belongs to the PEP-utilizing enzyme family. Mg(2+) serves as cofactor.

Its subcellular location is the cytoplasm. The enzyme catalyses L-histidyl-[protein] + phosphoenolpyruvate = N(pros)-phospho-L-histidyl-[protein] + pyruvate. It carries out the reaction D-fructose(out) + N(pros)-phospho-L-histidyl-[protein] = D-fructose 1-phosphate(in) + L-histidyl-[protein]. Multifunctional protein that includes general (non sugar-specific) and sugar-specific components of the phosphoenolpyruvate-dependent sugar phosphotransferase system (sugar PTS). This major carbohydrate active transport system catalyzes the phosphorylation of incoming sugar substrates concomitantly with their translocation across the cell membrane. The enzyme II FryABC PTS system is involved in fructose transport. In Escherichia coli O157:H7, this protein is Multiphosphoryl transfer protein (fryA).